A 433-amino-acid polypeptide reads, in one-letter code: F-box/kelch-repeat protein At1g24800 (433 aa).

Positions 23 to 71 constitute an F-box domain; that stretch reads TSMCDLPPKLVGEKILTRIPITSLRAVRSTCKLWNALTKDRVLGKAAAQ. Kelch repeat units lie at residues 170-216 and 286-337; these read HKIL…LYGV and VLYH…RFDN.

This Arabidopsis thaliana (Mouse-ear cress) protein is F-box/kelch-repeat protein At1g24800.